Consider the following 103-residue polypeptide: MVKVIDVGRVVVKVLGREAGRKAVVVDIVDENYVVITGPKSLSGVRRRRVNINHIEPTDKKIEIKKGASDEEVLKALEAAGLVEYMKERVKPKLFEITPADVK.

The protein belongs to the eukaryotic ribosomal protein eL14 family.

The sequence is that of Large ribosomal subunit protein eL14 from Pyrobaculum calidifontis (strain DSM 21063 / JCM 11548 / VA1).